We begin with the raw amino-acid sequence, 277 residues long: Large ribosomal subunit protein uL2 (277 aa).

The disordered stretch occupies residues 219–277; that stretch reads TVRGSVMNPNDHPHGGGEGKAPVGRKAPSTPWGKPALGLKTRNKKAKSDKLIVRRRNEK. Positions 264–277 are enriched in basic and acidic residues; sequence AKSDKLIVRRRNEK.

It belongs to the universal ribosomal protein uL2 family. As to quaternary structure, part of the 50S ribosomal subunit. Forms a bridge to the 30S subunit in the 70S ribosome.

In terms of biological role, one of the primary rRNA binding proteins. Required for association of the 30S and 50S subunits to form the 70S ribosome, for tRNA binding and peptide bond formation. It has been suggested to have peptidyltransferase activity; this is somewhat controversial. Makes several contacts with the 16S rRNA in the 70S ribosome. The chain is Large ribosomal subunit protein uL2 from Streptococcus pneumoniae serotype 2 (strain D39 / NCTC 7466).